A 564-amino-acid chain; its full sequence is Probable pectinesterase/pectinesterase inhibitor 46 (564 aa).

The chain crosses the membrane as a helical span at residues 25–45; sequence IAIIAISSIVLVCIVVGAVVG. The segment at 62–207 is pectinesterase inhibitor 46; sequence EPISVSVKAL…TEMTSNALAI (146 aa). Residues Asn90, Asn126, Asn147, and Asn196 are each glycosylated (N-linked (GlcNAc...) asparagine). The segment at 257–550 is pectinesterase 46; that stretch reads TIVVAKDGSG…FTVKPFIDGN (294 aa). Residues Thr332 and Gln362 each contribute to the substrate site. Residue Asp385 is the Proton donor; for pectinesterase activity of the active site. Cys399 and Cys419 are disulfide-bonded. Catalysis depends on Asp406, which acts as the Nucleophile; for pectinesterase activity. N-linked (GlcNAc...) asparagine glycosylation is found at Asn452 and Asn460. Substrate is bound by residues Arg470 and Trp472.

In the N-terminal section; belongs to the PMEI family. The protein in the C-terminal section; belongs to the pectinesterase family.

The protein resides in the membrane. It catalyses the reaction [(1-&gt;4)-alpha-D-galacturonosyl methyl ester](n) + n H2O = [(1-&gt;4)-alpha-D-galacturonosyl](n) + n methanol + n H(+). Its pathway is glycan metabolism; pectin degradation; 2-dehydro-3-deoxy-D-gluconate from pectin: step 1/5. In terms of biological role, acts in the modification of cell walls via demethylesterification of cell wall pectin. In Arabidopsis thaliana (Mouse-ear cress), this protein is Probable pectinesterase/pectinesterase inhibitor 46 (PME46).